The primary structure comprises 692 residues: Elongation factor G 1 (692 aa).

A tr-type G domain is found at 8-283; that stretch reads EKTRNIGIMA…SVVEYLPSPV (276 aa). Residues 17 to 24, 81 to 85, and 135 to 138 contribute to the GTP site; these read AHIDAGKT, DTPGH, and NKMD.

Belongs to the TRAFAC class translation factor GTPase superfamily. Classic translation factor GTPase family. EF-G/EF-2 subfamily.

The protein localises to the cytoplasm. In terms of biological role, catalyzes the GTP-dependent ribosomal translocation step during translation elongation. During this step, the ribosome changes from the pre-translocational (PRE) to the post-translocational (POST) state as the newly formed A-site-bound peptidyl-tRNA and P-site-bound deacylated tRNA move to the P and E sites, respectively. Catalyzes the coordinated movement of the two tRNA molecules, the mRNA and conformational changes in the ribosome. The protein is Elongation factor G 1 of Geobacter metallireducens (strain ATCC 53774 / DSM 7210 / GS-15).